We begin with the raw amino-acid sequence, 264 residues long: Acetylglutamate kinase (264 aa).

Substrate is bound by residues 50–51, Arg72, and Asn164; that span reads GG.

The protein belongs to the acetylglutamate kinase family. ArgB subfamily.

Its subcellular location is the cytoplasm. It catalyses the reaction N-acetyl-L-glutamate + ATP = N-acetyl-L-glutamyl 5-phosphate + ADP. It functions in the pathway amino-acid biosynthesis; L-arginine biosynthesis; N(2)-acetyl-L-ornithine from L-glutamate: step 2/4. Functionally, catalyzes the ATP-dependent phosphorylation of N-acetyl-L-glutamate. This chain is Acetylglutamate kinase, found in Moritella profunda.